Consider the following 197-residue polypeptide: MTKKKSKNIKFCRREGENLEFFSEKKYLEKSRSNLTPGENGTEKGKVSDFGLILRTKQKIKRYYCIFEKEFKKIYFIIKKNFFNNIDLINFLERRLDNVIYRFNFSISRKESRQLIIHGNVFVNYFKNKIPSYLLSPGDVITINKKFLLKKYLYDYKNILFVNWLYNKYFDGYGIFLSFSNKNLFNLNKNLILDIYK.

Residues 94–158 (RRLDNVIYRF…LKKYLYDYKN (65 aa)) enclose the S4 RNA-binding domain.

It belongs to the universal ribosomal protein uS4 family. As to quaternary structure, part of the 30S ribosomal subunit. Contacts protein S5. The interaction surface between S4 and S5 is involved in control of translational fidelity.

Functionally, one of the primary rRNA binding proteins, it binds directly to 16S rRNA where it nucleates assembly of the body of the 30S subunit. Its function is as follows. With S5 and S12 plays an important role in translational accuracy. This Carsonella ruddii (strain PV) protein is Small ribosomal subunit protein uS4 (rpsD).